A 63-amino-acid polypeptide reads, in one-letter code: Prokaryotic ubiquitin-like protein Pup (63 aa).

The segment covering 1–11 (MAQEQTRRGGG) has biased composition (basic and acidic residues). A disordered region spans residues 1 to 36 (MAQEQTRRGGGGDDDEFTSSTSVGQERREKLTEETD). The tract at residues 20 to 57 (STSVGQERREKLTEETDDLLDEIDDVLEENAEDFVRAY) is ARC ATPase binding. The stretch at 23–51 (VGQERREKLTEETDDLLDEIDDVLEENAE) forms a coiled coil. Q63 is subject to Deamidated glutamine. Residue Q63 forms an Isoglutamyl lysine isopeptide (Gln-Lys) (interchain with K-? in acceptor proteins) linkage.

This sequence belongs to the prokaryotic ubiquitin-like protein family. In terms of assembly, strongly interacts with the proteasome-associated ATPase ARC through a hydrophobic interface; the interacting region of Pup lies in its C-terminal half. There is one Pup binding site per ARC hexamer ring. In terms of processing, is modified by deamidation of its C-terminal glutamine to glutamate by the deamidase Dop, a prerequisite to the subsequent pupylation process.

Its pathway is protein degradation; proteasomal Pup-dependent pathway. Functionally, protein modifier that is covalently attached to lysine residues of substrate proteins, thereby targeting them for proteasomal degradation. The tagging system is termed pupylation. The sequence is that of Prokaryotic ubiquitin-like protein Pup from Mycobacterium leprae (strain Br4923).